A 170-amino-acid polypeptide reads, in one-letter code: Adenine phosphoribosyltransferase (170 aa).

It belongs to the purine/pyrimidine phosphoribosyltransferase family. As to quaternary structure, homodimer.

It is found in the cytoplasm. The enzyme catalyses AMP + diphosphate = 5-phospho-alpha-D-ribose 1-diphosphate + adenine. The protein operates within purine metabolism; AMP biosynthesis via salvage pathway; AMP from adenine: step 1/1. Functionally, catalyzes a salvage reaction resulting in the formation of AMP, that is energically less costly than de novo synthesis. This chain is Adenine phosphoribosyltransferase, found in Bacillus anthracis (strain A0248).